Here is a 168-residue protein sequence, read N- to C-terminus: G/U mismatch-specific DNA glycosylase (168 aa).

It belongs to the uracil-DNA glycosylase (UDG) superfamily. TDG/mug family. Binds DNA as a monomer.

The protein localises to the cytoplasm. The enzyme catalyses Specifically hydrolyzes mismatched double-stranded DNA and polynucleotides, releasing free uracil.. In terms of biological role, excises ethenocytosine and uracil, which can arise by alkylation or deamination of cytosine, respectively, from the corresponding mispairs with guanine in ds-DNA. It is capable of hydrolyzing the carbon-nitrogen bond between the sugar-phosphate backbone of the DNA and the mispaired base. The complementary strand guanine functions in substrate recognition. Required for DNA damage lesion repair in stationary-phase cells. The protein is G/U mismatch-specific DNA glycosylase of Escherichia fergusonii (strain ATCC 35469 / DSM 13698 / CCUG 18766 / IAM 14443 / JCM 21226 / LMG 7866 / NBRC 102419 / NCTC 12128 / CDC 0568-73).